A 1890-amino-acid chain; its full sequence is Callose synthase 9 (1890 aa).

Residues 1 to 489 (MSRAESSWER…EHRTFLHLYH (489 aa)) are Cytoplasmic-facing. A helical transmembrane segment spans residues 490 to 510 (SFHRLWIFLAMMFQALAIIAF). Topologically, residues 511–523 (NKDDLTSRKTLLQ) are extracellular. A helical membrane pass occupies residues 524-544 (ILSLGPTFVVMKFSESVLEVI). Topologically, residues 545-560 (MMYGAYSTTRRLAVSR) are cytoplasmic. The chain crosses the membrane as a helical span at residues 561–581 (IFLRFIWFGLASVFISFLYVK). The Extracellular segment spans residues 582 to 591 (SLKAPNSDSP). Residues 592–612 (IVQLYLIVIAIYGGVQFFFSI) traverse the membrane as a helical segment. Over 613 to 658 (LMRIPTCHNIANKCDRWPVIRFFKWMRQERHYVGRGMYERTSDFIK) the chain is Cytoplasmic. The chain crosses the membrane as a helical span at residues 659 to 679 (YLLFWLVVLSAKFSFAYFLQI). At 680-722 (KPLVGPTRMIVKQNNIPYSWHDFVSRKNYNALTVASLWAPVVA) the chain is on the extracellular side. A helical membrane pass occupies residues 723–743 (IYLLDIHIFYTIFSAFLGFLL). Residues 744 to 1457 (GARDRLGEIR…QLLDFFRMMS (714 aa)) are Cytoplasmic-facing. A helical transmembrane segment spans residues 1458–1478 (FFFTTVGFYLCTMLTVLTVYI). The Extracellular portion of the chain corresponds to 1479–1512 (FLYGRAYLALSGVGATIRERAILLDDTALSAALN). A helical membrane pass occupies residues 1513 to 1533 (AQFLFQIGVFTAVPMVLGFIL). The Cytoplasmic segment spans residues 1534 to 1539 (EQGFLQ). Residues 1540–1560 (AIVSFITMQFQLCTVFFTFSL) form a helical membrane-spanning segment. Residues 1561–1609 (GTRTHYFGRTILHGGARYQATGRGFVVKHIKFSENYRLYSRSHFVKAME) lie on the Extracellular side of the membrane. Helical transmembrane passes span 1610–1630 (VILL…AVSY) and 1631–1651 (ILLT…PYLF). At 1652–1703 (NPAGFEWQKVVEDFKEWTNWLFYRGGIGVKGAESWEAWWEEELSHIRTLSGR) the chain is on the extracellular side. The chain crosses the membrane as a helical span at residues 1704–1724 (IMETILSLRFFIFQYGIVYKL). Over 1725–1732 (KLQGSDTS) the chain is Cytoplasmic. The helical transmembrane segment at 1733–1753 (FAVYGWSWVAFAMIIVLFKVF) threads the bilayer. Residues 1754–1768 (TFSQKISVNFQLLLR) lie on the Extracellular side of the membrane. A helical membrane pass occupies residues 1769–1789 (FIQGLSLLMALAGIIVAVVLT). Over 1790–1795 (PLSVTD) the chain is Cytoplasmic. A helical transmembrane segment spans residues 1796-1816 (IFACVLAFIPTGWGILSIACA). Residues 1817–1838 (WKPVLKRMGMWKSIRSLARLYD) are Extracellular-facing. The helical transmembrane segment at 1839-1859 (ALMGMLIFLPVALCSWFPFVS) threads the bilayer. At 1860-1890 (TFQTRMMFNQAFSRGLEISLILAGDNPNSGL) the chain is on the cytoplasmic side.

This sequence belongs to the glycosyltransferase 48 family.

It is found in the cell membrane. It catalyses the reaction [(1-&gt;3)-beta-D-glucosyl](n) + UDP-alpha-D-glucose = [(1-&gt;3)-beta-D-glucosyl](n+1) + UDP + H(+). Its function is as follows. Involved in sporophytic and gametophytic development. Required for normal plant development. During pollen formation, required for the entry of microspores into mitosis and microspore symmetric division. May be required for correct temporal and spatial control of callose deposition during pollen mitosis. During plant growth and development, callose is found as a transitory component of the cell plate in dividing cells, is a major component of pollen mother cell walls and pollen tubes, and is found as a structural component of plasmodesmatal canals. The sequence is that of Callose synthase 9 (CALS9) from Arabidopsis thaliana (Mouse-ear cress).